We begin with the raw amino-acid sequence, 290 residues long: Shikimate dehydrogenase (NADP(+)) (290 aa).

Residues 21-23 and Thr-68 each bind shikimate; that span reads SLS. Lys-72 serves as the catalytic Proton acceptor. Glu-84 lines the NADP(+) pocket. Residues Asn-93 and Asp-108 each contribute to the shikimate site. NADP(+)-binding positions include 132-136 and Leu-230; that span reads GYGGA. Tyr-232 contributes to the shikimate binding site. Gly-253 provides a ligand contact to NADP(+).

It belongs to the shikimate dehydrogenase family. Homodimer.

It carries out the reaction shikimate + NADP(+) = 3-dehydroshikimate + NADPH + H(+). It participates in metabolic intermediate biosynthesis; chorismate biosynthesis; chorismate from D-erythrose 4-phosphate and phosphoenolpyruvate: step 4/7. Functionally, involved in the biosynthesis of the chorismate, which leads to the biosynthesis of aromatic amino acids. Catalyzes the reversible NADPH linked reduction of 3-dehydroshikimate (DHSA) to yield shikimate (SA). The sequence is that of Shikimate dehydrogenase (NADP(+)) from Synechocystis sp. (strain ATCC 27184 / PCC 6803 / Kazusa).